The sequence spans 648 residues: Spastin (648 aa).

Residues 1–40 are Cytoplasmic-facing; the sequence is MASTVALLRDSSDDRENFDDGETDCVQVGRKRKLTVFFYP. Positions 41–61 form an intramembrane region, helical; that stretch reads LLLVFWLLRWVFYQFFLVLCF. The Cytoplasmic segment spans residues 62 to 648; the sequence is VCRGFVPRRH…WNREFGDITV (587 aa). Positions 99 to 174 constitute an MIT domain; it reads HKKAFDFISK…EMARDRLDFL (76 aa). A disordered region spans residues 188 to 346; that stretch reads PWHGGVAPAQ…SQRSLLSSRV (159 aa). Positions 247–266 are enriched in low complexity; the sequence is TGVTLRRQQQQQLGGVSTVS. 414 to 421 contributes to the ATP binding site; the sequence is GPPGNGKT.

Belongs to the AAA ATPase family. Spastin subfamily. Homohexamer. The homohexamer is stabilized by ATP-binding. The homohexamer may adopt a ring conformation through which microtubules pass prior to being severed. Interacts with microtubules.

Its subcellular location is the membrane. It is found in the cytoplasm. The protein localises to the cytoskeleton. It localises to the microtubule organizing center. The protein resides in the centrosome. The catalysed reaction is n ATP + n H2O + a microtubule = n ADP + n phosphate + (n+1) alpha/beta tubulin heterodimers.. ATP-dependent microtubule severing protein. Microtubule severing may promote reorganization of cellular microtubule arrays and the release of microtubules from the microtubule organizing center following nucleation. The polypeptide is Spastin (spas) (Ixodes scapularis (Black-legged tick)).